The primary structure comprises 280 residues: Energy-coupling factor transporter ATP-binding protein EcfA1 (280 aa).

The region spanning L6–D241 is the ABC transporter domain. Position 40 to 47 (G40 to S47) interacts with ATP.

The protein belongs to the ABC transporter superfamily. Energy-coupling factor EcfA family. As to quaternary structure, forms a stable energy-coupling factor (ECF) transporter complex composed of 2 membrane-embedded substrate-binding proteins (S component), 2 ATP-binding proteins (A component) and 2 transmembrane proteins (T component).

It is found in the cell membrane. Its function is as follows. ATP-binding (A) component of a common energy-coupling factor (ECF) ABC-transporter complex. Unlike classic ABC transporters this ECF transporter provides the energy necessary to transport a number of different substrates. This Bacillus cereus (strain ZK / E33L) protein is Energy-coupling factor transporter ATP-binding protein EcfA1.